We begin with the raw amino-acid sequence, 299 residues long: GTPase Era (299 aa).

An Era-type G domain is found at 4–171 (KSGFVAILGR…MEILKENLDE (168 aa)). A G1 region spans residues 12 to 19 (GRPNVGKS). 12–19 (GRPNVGKS) serves as a coordination point for GTP. The segment at 38–42 (QTTRN) is G2. Residues 59–62 (DTPG) are G3. GTP is bound by residues 59 to 63 (DTPGI) and 121 to 124 (NKID). Residues 121–124 (NKID) form a G4 region. Residues 150-152 (ISA) form a G5 region. The KH type-2 domain occupies 202–280 (TREEIPHSVA…FLETWVKVKK (79 aa)).

It belongs to the TRAFAC class TrmE-Era-EngA-EngB-Septin-like GTPase superfamily. Era GTPase family. As to quaternary structure, monomer.

Its subcellular location is the cytoplasm. The protein resides in the cell membrane. In terms of biological role, an essential GTPase that binds both GDP and GTP, with rapid nucleotide exchange. Plays a role in 16S rRNA processing and 30S ribosomal subunit biogenesis and possibly also in cell cycle regulation and energy metabolism. The sequence is that of GTPase Era from Streptococcus suis (strain 98HAH33).